A 288-amino-acid chain; its full sequence is Programmed cell death protein 1 (288 aa).

An N-terminal signal peptide occupies residues 1-24 (MWVRQVPWSFTWAVLQLSWQSGWL). The Extracellular portion of the chain corresponds to 25–169 (LEVPNGPWRS…PKPEGRFQGM (145 aa)). One can recognise an Ig-like V-type domain in the interval 31-139 (PWRSLTFYPA…PKAKIEESPG (109 aa)). Asn-49, Asn-58, Asn-74, and Asn-116 each carry an N-linked (GlcNAc...) asparagine glycan. A disulfide bond links Cys-54 and Cys-123. The tract at residues 70–77 (LSPSNQTE) is interaction with CD274/PDCD1L1. The chain crosses the membrane as a helical span at residues 170–190 (VIGIMSALVGIPVLLLLAWAL). Over 191–288 (AVFCSTSMSE…HEDGHCSWPL (98 aa)) the chain is Cytoplasmic. The ITIM motif motif lies at 223 to 228 (VAYEEL). A Phosphotyrosine modification is found at Tyr-225. A Glycyl lysine isopeptide (Lys-Gly) (interchain with G-Cter in ubiquitin) cross-link involves residue Lys-235. Thr-236 bears the Phosphothreonine; by MAPK3 mark. The short motif at 247–251 (EYATI) is the ITSM motif element. Tyr-248 bears the Phosphotyrosine mark. Residues 263 to 288 (GRRGSADGLQGPRPPRHEDGHCSWPL) are disordered. Positions 277–288 (PRHEDGHCSWPL) are enriched in basic and acidic residues.

In terms of assembly, monomer. Interacts with CD274/PDCD1L1. Interacts with CD273/PDCD1LG2. Interacts with FBXO38; leading to ubiquitination and degradation by the proteasome. In terms of processing, ubiquitinated at Lys-235 by the SCF(FBXO38) complex, leading to its proteasomal degradation. Ubiquitinated via 'Lys-48'-linked polyubiquitin chains. Deubiquitinated and thus stabilized by USP5. Post-translationally, tyrosine phosphorylated at Tyr-225 (within ITIM motif) and Tyr-248 (ITSM motif) upon ligand binding. Phosphorylation at Tyr-248 promotes the recruitment of the protein tyrosine phosphatase PTPN11/SHP-2 that mediates dephosphorylation of key TCR proximal signaling molecules, such as ZAP70, PRKCQ/PKCtheta and CD247/CD3zeta. Phosphorylation at Thr-236 promotes the recruitment of the deubiquitinase USP5. In terms of tissue distribution, thymus-specific.

It localises to the cell membrane. Its function is as follows. Inhibitory receptor on antigen activated T-cells that plays a critical role in induction and maintenance of immune tolerance to self. Delivers inhibitory signals upon binding to ligands, such as CD274/PDCD1L1 and CD273/PDCD1LG2. Following T-cell receptor (TCR) engagement, PDCD1 associates with CD3-TCR in the immunological synapse and directly inhibits T-cell activation. Suppresses T-cell activation through the recruitment of PTPN11/SHP-2: following ligand-binding, PDCD1 is phosphorylated within the ITSM motif, leading to the recruitment of the protein tyrosine phosphatase PTPN11/SHP-2 that mediates dephosphorylation of key TCR proximal signaling molecules, such as ZAP70, PRKCQ/PKCtheta and CD247/CD3zeta. The PDCD1-mediated inhibitory pathway is exploited by tumors to attenuate anti-tumor immunity and facilitate tumor survival. In Mus musculus (Mouse), this protein is Programmed cell death protein 1.